Reading from the N-terminus, the 71-residue chain is Cell division protein ZapB (71 aa).

Residues 5–67 (LEVLEQLESK…RALLGKMEQM (63 aa)) are a coiled coil.

This sequence belongs to the ZapB family. In terms of assembly, homodimer. The ends of the coiled-coil dimer bind to each other, forming polymers. Interacts with FtsZ.

Its subcellular location is the cytoplasm. Functionally, non-essential, abundant cell division factor that is required for proper Z-ring formation. It is recruited early to the divisome by direct interaction with FtsZ, stimulating Z-ring assembly and thereby promoting cell division earlier in the cell cycle. Its recruitment to the Z-ring requires functional FtsA or ZipA. The polypeptide is Cell division protein ZapB (Aeromonas salmonicida (strain A449)).